The sequence spans 465 residues: Alpha-2A adrenergic receptor (465 aa).

Residues 1 to 48 (MFRQEQPLAEGSFAPMGSLQPDAGNASWNGTEAPGGGARATPYSLQVT) are Extracellular-facing. 2 N-linked (GlcNAc...) asparagine glycosylation sites follow: Asn-25 and Asn-29. Residues 49-74 (LTLVCLAGLLMLLTVFGNVLVIIAVF) form a helical membrane-spanning segment. Topologically, residues 75–85 (TSRALKAPQNL) are cytoplasmic. Residues 86–111 (FLVSLASADILVATLVIPFSLANEVM) form a helical membrane-spanning segment. Residues 112–121 (GYWYFGKAWC) lie on the Extracellular side of the membrane. An intrachain disulfide couples Cys-121 to Cys-203. The chain crosses the membrane as a helical span at residues 122-144 (EIYLALDVLFCTSSIVHLCAISL). The Cytoplasmic segment spans residues 145 to 166 (DRYWSITQAIEYNLKRTPRRIK). A helical transmembrane segment spans residues 167 to 187 (AIIITVWVISAVISFPPLISI). Residues 188–209 (EKKGGGGGPQPAEPRCEINDQK) lie on the Extracellular side of the membrane. Residues 210–232 (WYVISSCIGSFFAPCLIMILVYV) traverse the membrane as a helical segment. The Cytoplasmic segment spans residues 233 to 389 (RIYQIAKRRT…RQNREKRFTF (157 aa)). The disordered stretch occupies residues 242 to 368 (TRVPPSRRGP…TPAAGPGEER (127 aa)). Positions 313-330 (SSDHAERPPGPRRPERGP) are enriched in basic and acidic residues. Ser-346 carries the phosphoserine modification. Arg-368 is subject to Omega-N-methylarginine. Residues 390 to 410 (VLAVVIGVFVVCWFPFFFTYT) traverse the membrane as a helical segment. The Extracellular portion of the chain corresponds to 411 to 424 (LTAVGCSVPRTLFK). The chain crosses the membrane as a helical span at residues 425 to 444 (FFFWFGYCNSSLNPVIYTIF). Over 445 to 465 (NHDFRRAFKKILCRGDRKRIV) the chain is Cytoplasmic. The S-palmitoyl cysteine moiety is linked to residue Cys-457.

Belongs to the G-protein coupled receptor 1 family. Adrenergic receptor subfamily. ADRA2A sub-subfamily.

Its subcellular location is the cell membrane. Functionally, alpha-2 adrenergic receptors mediate the catecholamine-induced inhibition of adenylate cyclase through the action of G proteins. The rank order of potency for agonists of this receptor is oxymetazoline &gt; clonidine &gt; epinephrine &gt; norepinephrine &gt; phenylephrine &gt; dopamine &gt; p-synephrine &gt; p-tyramine &gt; serotonin = p-octopamine. For antagonists, the rank order is yohimbine &gt; phentolamine = mianserine &gt; chlorpromazine = spiperone = prazosin &gt; propanolol &gt; alprenolol = pindolol. The polypeptide is Alpha-2A adrenergic receptor (Homo sapiens (Human)).